A 230-amino-acid chain; its full sequence is Fibrillarin-like rRNA/tRNA 2'-O-methyltransferase (230 aa).

S-adenosyl-L-methionine is bound by residues 87 to 88 (TT), 105 to 106 (EY), 130 to 131 (DA), and 150 to 153 (DVAQ).

Interacts with nop5. Component of box C/D small ribonucleoprotein (sRNP) particles that contain rpl7ae, FlpA and nop5, plus a guide RNA.

In terms of biological role, involved in pre-rRNA and tRNA processing. Utilizes the methyl donor S-adenosyl-L-methionine to catalyze the site-specific 2'-hydroxyl methylation of ribose moieties in rRNA and tRNA. Site specificity is provided by a guide RNA that base pairs with the substrate. Methylation occurs at a characteristic distance from the sequence involved in base pairing with the guide RNA. This Methanocaldococcus jannaschii (strain ATCC 43067 / DSM 2661 / JAL-1 / JCM 10045 / NBRC 100440) (Methanococcus jannaschii) protein is Fibrillarin-like rRNA/tRNA 2'-O-methyltransferase.